Consider the following 155-residue polypeptide: uncharacterized protein (155 aa).

This is an uncharacterized protein from Rickettsia prowazekii (strain Madrid E).